We begin with the raw amino-acid sequence, 306 residues long: tRNA dimethylallyltransferase (306 aa).

Position 12 to 19 (12 to 19) interacts with ATP; the sequence is GPTAAGKT. 14–19 provides a ligand contact to substrate; it reads TAAGKT. Interaction with substrate tRNA regions lie at residues 37-40, 161-165, and 242-247; these read DSAL, QRINR, and RCVGYR.

It belongs to the IPP transferase family. As to quaternary structure, monomer. Mg(2+) serves as cofactor.

The catalysed reaction is adenosine(37) in tRNA + dimethylallyl diphosphate = N(6)-dimethylallyladenosine(37) in tRNA + diphosphate. Its function is as follows. Catalyzes the transfer of a dimethylallyl group onto the adenine at position 37 in tRNAs that read codons beginning with uridine, leading to the formation of N6-(dimethylallyl)adenosine (i(6)A). This is tRNA dimethylallyltransferase from Pseudoalteromonas translucida (strain TAC 125).